The following is a 237-amino-acid chain: Large ribosomal subunit protein uL22m (237 aa).

It belongs to the universal ribosomal protein uL22 family.

The protein localises to the mitochondrion. The protein is Large ribosomal subunit protein uL22m (mrpl22) of Dictyostelium discoideum (Social amoeba).